We begin with the raw amino-acid sequence, 371 residues long: tRNA-specific 2-thiouridylase MnmA (371 aa).

Residues 16–23 (GMSGGVDS) and methionine 42 each bind ATP. Positions 102 to 104 (NPD) are interaction with target base in tRNA. Catalysis depends on cysteine 107, which acts as the Nucleophile. A disulfide bridge links cysteine 107 with cysteine 204. Glycine 132 is an ATP binding site. Positions 154–156 (KDQ) are interaction with tRNA. Residue cysteine 204 is the Cysteine persulfide intermediate of the active site. The segment at 316–317 (RY) is interaction with tRNA.

Belongs to the MnmA/TRMU family.

It is found in the cytoplasm. It catalyses the reaction S-sulfanyl-L-cysteinyl-[protein] + uridine(34) in tRNA + AH2 + ATP = 2-thiouridine(34) in tRNA + L-cysteinyl-[protein] + A + AMP + diphosphate + H(+). Its function is as follows. Catalyzes the 2-thiolation of uridine at the wobble position (U34) of tRNA, leading to the formation of s(2)U34. In Shewanella pealeana (strain ATCC 700345 / ANG-SQ1), this protein is tRNA-specific 2-thiouridylase MnmA.